The following is a 440-amino-acid chain: MEQRGQNAPAASGARKRHGPGPREARGARPGPRVPKTLVLVVAAVLLLVSAESALITQQDLAPQQRAAPQQKRSSPSEGLCPPGHHISEDGRDCISCKYGQDYSTHWNDLLFCLRCTRCDSGEVELSPCTTTRNTVCQCEEGTFREEDSPEMCRKCRTGCPRGMVKVGDCTPWSDIECVHKESGTKHSGEVPAVEETVTSSPGTPASPCSLSGIIIGVTVAAVVLIVAVFVCKSLLWKKVLPYLKGICSGGGGDPERVDRSSQRPGAEDNVLNEIVSILQPTQVPEQEMEVQEPAEPTGVNMLSPGESEHLLEPAEAERSQRRRLLVPANEGDPTETLRQCFDDFADLVPFDSWEPLMRKLGLMDNEIKVAKAEAAGHRDTLYTMLIKWVNKTGRDASVHTLLDALETLGERLAKQKIEDHLLSSGKFMYLEGNADSAMS.

Disordered stretches follow at residues 1 to 32 and 60 to 84; these read MEQR…RPGP and DLAP…CPPG. The signal sequence occupies residues 1 to 55; that stretch reads MEQRGQNAPAASGARKRHGPGPREARGARPGPRVPKTLVLVVAAVLLLVSAESAL. Over 56-210 the chain is Extracellular; the sequence is ITQQDLAPQQ…SPGTPASPCS (155 aa). TNFR-Cys repeat units follow at residues 57 to 94, 97 to 137, and 138 to 178; these read TQQD…GRDC, CKYG…NTVC, and QCEE…DIEC. A compositionally biased stretch (low complexity) spans 60–71; the sequence is DLAPQQRAAPQQ. Cystine bridges form between cysteine 81/cysteine 94, cysteine 97/cysteine 113, cysteine 116/cysteine 129, cysteine 119/cysteine 137, cysteine 139/cysteine 153, cysteine 156/cysteine 170, and cysteine 160/cysteine 178. Residues 192–206 form a TAPE repeat; sequence PAVEETVTSSPGTPA. A helical transmembrane segment spans residues 211–231; it reads LSGIIIGVTVAAVVLIVAVFV. The Cytoplasmic portion of the chain corresponds to 232–440; sequence CKSLLWKKVL…LEGNADSAMS (209 aa). Positions 339–422 constitute a Death domain; the sequence is RQCFDDFADL…LAKQKIEDHL (84 aa).

As to quaternary structure, monomer. Can interact with TRADD and RIPK1. Interacts with HCMV protein UL141; this interaction prevents TNFRSF10B cell surface expression. Two TNFRSF10B monomers interact with a UL141 homodimer. Three TNFRSF10B molecules interact with TNFSF10 homotrimer. In the absence of stimulation, interacts with BIRC2, DDX3X and GSK3B. The interaction with BIRC2 and DDX3X is further enhanced upon receptor stimulation and accompanied by DDX3X and BIRC2 cleavage. In terms of processing, (Microbial infection) Glycosylated on Arg residue by S.typhimurium protein Ssek3. As to expression, widely expressed in adult and fetal tissues; very highly expressed in tumor cell lines such as HeLaS3, K-562, HL-60, SW480, A-549 and G-361; highly expressed in heart, peripheral blood lymphocytes, liver, pancreas, spleen, thymus, prostate, ovary, uterus, placenta, testis, esophagus, stomach and throughout the intestinal tract; not detectable in brain.

The protein resides in the membrane. In terms of biological role, receptor for the cytotoxic ligand TNFSF10/TRAIL. The adapter molecule FADD recruits caspase-8 to the activated receptor. The resulting death-inducing signaling complex (DISC) performs caspase-8 proteolytic activation which initiates the subsequent cascade of caspases (aspartate-specific cysteine proteases) mediating apoptosis. Promotes the activation of NF-kappa-B. Essential for ER stress-induced apoptosis. The protein is Tumor necrosis factor receptor superfamily member 10B (TNFRSF10B) of Homo sapiens (Human).